We begin with the raw amino-acid sequence, 131 residues long: Histone H2A (131 aa).

The interval methionine 1 to leucine 24 is disordered. N6-acetyllysine is present on residues lysine 6 and lysine 8. The span at lysine 8–glycine 23 shows a compositional bias: low complexity. Glutamine 105 bears the N5-methylglutamine mark. Position 128 is a phosphoserine (serine 128). The [ST]-Q motif motif lies at serine 128–glutamine 129.

Belongs to the histone H2A family. The nucleosome is a histone octamer containing two molecules each of H2A, H2B, H3 and H4 assembled in one H3-H4 heterotetramer and two H2A-H2B heterodimers. The octamer wraps approximately 147 bp of DNA. In terms of processing, phosphorylated to form H2AS128ph (gamma-H2A) in response to DNA double-strand breaks (DSBs) generated by exogenous genotoxic agents and by stalled replication forks. Phosphorylation is dependent on the DNA damage checkpoint kinases MEC1/ATR and TEL1/ATM, spreads on either side of a detected DSB site and may mark the surrounding chromatin for recruitment of proteins required for DNA damage signaling and repair. Gamma-H2A is removed from the DNA prior to the strand invasion-primer extension step of the repair process and subsequently dephosphorylated. Dephosphorylation is necessary for efficient recovery from the DNA damage checkpoint. Post-translationally, acetylated by ESA1 to form H2AK4ac and H2AK7ac.

Its subcellular location is the nucleus. The protein localises to the chromosome. Functionally, core component of nucleosome which plays a central role in DNA double strand break (DSB) repair. Nucleosomes wrap and compact DNA into chromatin, limiting DNA accessibility to the cellular machineries which require DNA as a template. Histones thereby play a central role in transcription regulation, DNA repair, DNA replication and chromosomal stability. DNA accessibility is regulated via a complex set of post-translational modifications of histones, also called histone code, and nucleosome remodeling. This Cryptococcus neoformans var. neoformans serotype D (strain B-3501A) (Filobasidiella neoformans) protein is Histone H2A (HTA1).